A 705-amino-acid chain; its full sequence is Polyribonucleotide nucleotidyltransferase (705 aa).

Mg(2+) contacts are provided by D486 and D492. The region spanning 553-612 (PRIIKFKINPEKIRDVIGKGGAVIRALTEETGTTIDISDDGSVTIASISNEGGEQAKRRI) is the KH domain. Residues 622–690 (GKIYEGTVLK…DKGRLRLSMK (69 aa)) enclose the S1 motif domain.

The protein belongs to the polyribonucleotide nucleotidyltransferase family. The cofactor is Mg(2+).

The protein localises to the cytoplasm. The catalysed reaction is RNA(n+1) + phosphate = RNA(n) + a ribonucleoside 5'-diphosphate. Its function is as follows. Involved in mRNA degradation. Catalyzes the phosphorolysis of single-stranded polyribonucleotides processively in the 3'- to 5'-direction. This chain is Polyribonucleotide nucleotidyltransferase, found in Nitrosomonas eutropha (strain DSM 101675 / C91 / Nm57).